The chain runs to 68 residues: Large ribosomal subunit protein uL29 (68 aa).

This sequence belongs to the universal ribosomal protein uL29 family.

The protein is Large ribosomal subunit protein uL29 of Prochlorococcus marinus (strain SARG / CCMP1375 / SS120).